The following is a 134-amino-acid chain: Large ribosomal subunit protein bL19 (134 aa).

The disordered stretch occupies residues 108 to 134 (KSARIVERSDRSDKAKAQKAAAATAAE). Residues 111 to 123 (RIVERSDRSDKAK) are compositionally biased toward basic and acidic residues. Positions 125–134 (QKAAAATAAE) are enriched in low complexity.

Belongs to the bacterial ribosomal protein bL19 family.

Functionally, this protein is located at the 30S-50S ribosomal subunit interface and may play a role in the structure and function of the aminoacyl-tRNA binding site. The protein is Large ribosomal subunit protein bL19 of Methylorubrum extorquens (strain PA1) (Methylobacterium extorquens).